A 349-amino-acid polypeptide reads, in one-letter code: Glycosyltransferase 8 domain-containing protein 2 (349 aa).

Residues 1 to 6 (MALLRK) are Cytoplasmic-facing. Residues 7–24 (INQVLLFLLIVTLCVILY) form a helical; Signal-anchor for type II membrane protein membrane-spanning segment. The Lumenal segment spans residues 25-349 (KKVHKGTVPK…AGIFKLNHHS (325 aa)). N-linked (GlcNAc...) asparagine glycosylation is present at N234.

The protein belongs to the glycosyltransferase 8 family.

The protein resides in the membrane. In Homo sapiens (Human), this protein is Glycosyltransferase 8 domain-containing protein 2 (GLT8D2).